A 685-amino-acid chain; its full sequence is Serine/threonine-protein kinase PLK2 (685 aa).

A disordered region spans residues 24–71 (KGCGADSKKKRPPQPPEESQPPQSQAQVPPAAAHHHHHHSHSGPEISR). A compositionally biased stretch (low complexity) spans 43–55 (QPPQSQAQVPPAA). The Protein kinase domain maps to 82-334 (YCRGKVLGKG…LDDIIRHDFF (253 aa)). Residues 88–96 (LGKGGFAKC) and lysine 111 each bind ATP. Aspartate 205 acts as the Proton acceptor in catalysis. Threonine 239 carries the phosphothreonine modification. Positions 406–433 (SITQQPSKHRTDEELQPPTTTVARSGTP) are disordered. 2 consecutive POLO box domains span residues 503-581 (WVTK…YMEE) and 601-685 (YLLQ…QRCN).

The protein belongs to the protein kinase superfamily. Ser/Thr protein kinase family. CDC5/Polo subfamily. In terms of assembly, interacts with NSF; causing NSF dissociation from GRIA2. Interacts with CIB1. Catalytic activity is enhanced by phosphorylation of Thr-239.

It localises to the cytoplasm. Its subcellular location is the cytoskeleton. It is found in the microtubule organizing center. The protein resides in the centrosome. The protein localises to the centriole. It localises to the cell projection. Its subcellular location is the dendrite. It carries out the reaction L-seryl-[protein] + ATP = O-phospho-L-seryl-[protein] + ADP + H(+). It catalyses the reaction L-threonyl-[protein] + ATP = O-phospho-L-threonyl-[protein] + ADP + H(+). Activated by phosphorylation of Thr-239. Once activated, activity is stimulated by binding target proteins. Tumor suppressor serine/threonine-protein kinase involved in synaptic plasticity, centriole duplication and G1/S phase transition. Polo-like kinases act by binding and phosphorylating proteins that are already phosphorylated on a specific motif recognized by the POLO box domains. Phosphorylates CPAP, NPM1, RAPGEF2, RASGRF1, SNCA, SIPA1L1 and SYNGAP1. Plays a key role in synaptic plasticity and memory by regulating the Ras and Rap protein signaling: required for overactivity-dependent spine remodeling by phosphorylating the Ras activator RASGRF1 and the Rap inhibitor SIPA1L1 leading to their degradation by the proteasome. Conversely, phosphorylates the Rap activator RAPGEF2 and the Ras inhibitor SYNGAP1, promoting their activity. Also regulates synaptic plasticity independently of kinase activity, via its interaction with NSF that disrupts the interaction between NSF and the GRIA2 subunit of AMPARs, leading to a rapid rundown of AMPAR-mediated current that occludes long term depression. Required for procentriole formation and centriole duplication by phosphorylating CPAP and NPM1, respectively. Its induction by p53/TP53 suggests that it may participate in the mitotic checkpoint following stress. In Pongo abelii (Sumatran orangutan), this protein is Serine/threonine-protein kinase PLK2 (PLK2).